The primary structure comprises 72 residues: Probable neurotoxin pcD-993 (72 aa).

The first 19 residues, 1 to 19 (MNYLVMISFALLLVIGVES), serve as a signal peptide directing secretion. Residues 21-72 (RDGYFVEPDNCVVHCMPSSEMCDRGCKHNGATSGSCKAFSKGGNACWCKGLR) form the LCN-type CS-alpha/beta domain. Cystine bridges form between Cys-35–Cys-56, Cys-42–Cys-66, and Cys-46–Cys-68. A propeptide (removed by a carboxypeptidase) is located at residue Arg-72.

It belongs to the long (3 C-C) scorpion toxin superfamily. In terms of tissue distribution, expressed by the venom gland.

It localises to the secreted. The polypeptide is Probable neurotoxin pcD-993 (Androctonus australis (Sahara scorpion)).